The sequence spans 420 residues: Histidine--tRNA ligase (420 aa).

It belongs to the class-II aminoacyl-tRNA synthetase family. In terms of assembly, homodimer.

It is found in the cytoplasm. It catalyses the reaction tRNA(His) + L-histidine + ATP = L-histidyl-tRNA(His) + AMP + diphosphate + H(+). The chain is Histidine--tRNA ligase from Anaplasma phagocytophilum (strain HZ).